The chain runs to 515 residues: Low affinity ammonium transporter (515 aa).

Topologically, residues 1-78 (MSTSSSVTQK…IIGNSFGTTN (78 aa)) are extracellular. The helical transmembrane segment at 79-99 (AGQLSWFASAYSLTVGTFILI) threads the bilayer. At 100–111 (AGRLGDIFGHKK) the chain is on the cytoplasmic side. Residues 112-132 (FFVLGFFWYALWSLLAGFSVY) form a helical membrane-spanning segment. Topologically, residues 133 to 140 (SNQIFFDC) are extracellular. The chain crosses the membrane as a helical span at residues 141–161 (CRAFQGMGPAFLLPNAIAILG). Residues 162-171 (RTYKPGRRKN) lie on the Cytoplasmic side of the membrane. Residues 172–192 (MVFSLFGASAPGGFFLGAVFS) traverse the membrane as a helical segment. Residues 193 to 202 (SMLGQLAWWP) lie on the Extracellular side of the membrane. A helical membrane pass occupies residues 203 to 223 (WAYWIMGIACFVLAVAGYFVI). Residues 224–241 (PHTPMPSRDASSFKLLER) lie on the Cytoplasmic side of the membrane. The chain crosses the membrane as a helical span at residues 242–262 (IDFAGSVTGVVGLILFNFAWN). Topologically, residues 263–270 (QGPVVGWQ) are extracellular. A helical membrane pass occupies residues 271–291 (TPYTYALLIVGTFFLVIFAYI). Over 292-310 (ESRAAFPLLPFAALSSDTA) the chain is Cytoplasmic. Residues 311 to 331 (FVLSCIAAGWASFGIWIFYTW) form a helical membrane-spanning segment. The Extracellular segment spans residues 332–346 (QFMEDSRGQTPLLSS). A helical membrane pass occupies residues 347 to 367 (AQFSPVAISGFCAAVTTGFLL). Residues 368 to 374 (SHTPPST) are Cytoplasmic-facing. A helical transmembrane segment spans residues 375–395 (VMLFAMTAFTVGTILIATAPV). At 396 to 403 (HQTYWAQT) the chain is on the extracellular side. Residues 404 to 424 (FVSIIVMPWGMDMSFPAATIM) traverse the membrane as a helical segment. Residues 425-435 (LSDSMPHEHQG) lie on the Cytoplasmic side of the membrane. A helical membrane pass occupies residues 436-456 (LAASLVNTVVNYSISIGLGIA). The Extracellular portion of the chain corresponds to 457–479 (GTIESRVNDGGAKPLKGYRCSWY). The helical transmembrane segment at 480–500 (MGIGLSGLGIFVAATYAWSTF) threads the bilayer. At 501–515 (MKSKKRISEKQHFIE) the chain is on the cytoplasmic side.

The protein belongs to the major facilitator superfamily.

It is found in the cell membrane. Low affinity ammonium transporter of the plasma membrane. May be involved in drug resistance through pumping them out of the cell. This Saccharomyces cerevisiae (strain ATCC 204508 / S288c) (Baker's yeast) protein is Low affinity ammonium transporter.